Reading from the N-terminus, the 345-residue chain is D-fructose 1,6-bisphosphatase class 2/sedoheptulose 1,7-bisphosphatase (345 aa).

Positions 33, 57, 97, and 100 each coordinate Mn(2+). Substrate is bound by residues Glu-100–Thr-102, Tyr-131, Arg-176–Arg-178, and Asp-198–Asp-200. Glu-225 provides a ligand contact to Mn(2+).

Belongs to the FBPase class 2 family. As to quaternary structure, homotetramer. The cofactor is Mn(2+).

The catalysed reaction is beta-D-fructose 1,6-bisphosphate + H2O = beta-D-fructose 6-phosphate + phosphate. The enzyme catalyses D-sedoheptulose 1,7-bisphosphate + H2O = D-sedoheptulose 7-phosphate + phosphate. The protein operates within carbohydrate biosynthesis; Calvin cycle. In terms of biological role, catalyzes the hydrolysis of fructose 1,6-bisphosphate (Fru 1,6-P2) and sedoheptulose 1,7-bisphosphate (Sed 1,7-P2) to fructose 6-phosphate and sedoheptulose 7-phosphate, respectively. The polypeptide is D-fructose 1,6-bisphosphatase class 2/sedoheptulose 1,7-bisphosphatase (Trichormus variabilis (strain ATCC 29413 / PCC 7937) (Anabaena variabilis)).